A 366-amino-acid polypeptide reads, in one-letter code: tRNA 2-selenouridine synthase (366 aa).

The 125-residue stretch at 12–136 folds into the Rhodanese domain; sequence FLSGTPMMDV…MRGFLIDVIE (125 aa). The S-selanylcysteine intermediate role is filled by cysteine 95.

It belongs to the SelU family. In terms of assembly, monomer.

The catalysed reaction is 5-methylaminomethyl-2-thiouridine(34) in tRNA + selenophosphate + (2E)-geranyl diphosphate + H2O + H(+) = 5-methylaminomethyl-2-selenouridine(34) in tRNA + (2E)-thiogeraniol + phosphate + diphosphate. The enzyme catalyses 5-methylaminomethyl-2-thiouridine(34) in tRNA + (2E)-geranyl diphosphate = 5-methylaminomethyl-S-(2E)-geranyl-thiouridine(34) in tRNA + diphosphate. It catalyses the reaction 5-methylaminomethyl-S-(2E)-geranyl-thiouridine(34) in tRNA + selenophosphate + H(+) = 5-methylaminomethyl-2-(Se-phospho)selenouridine(34) in tRNA + (2E)-thiogeraniol. It carries out the reaction 5-methylaminomethyl-2-(Se-phospho)selenouridine(34) in tRNA + H2O = 5-methylaminomethyl-2-selenouridine(34) in tRNA + phosphate. Functionally, involved in the post-transcriptional modification of the uridine at the wobble position (U34) of tRNA(Lys), tRNA(Glu) and tRNA(Gln). Catalyzes the conversion of 2-thiouridine (S2U-RNA) to 2-selenouridine (Se2U-RNA). Acts in a two-step process involving geranylation of 2-thiouridine (S2U) to S-geranyl-2-thiouridine (geS2U) and subsequent selenation of the latter derivative to 2-selenouridine (Se2U) in the tRNA chain. This Cupriavidus pinatubonensis (strain JMP 134 / LMG 1197) (Cupriavidus necator (strain JMP 134)) protein is tRNA 2-selenouridine synthase.